A 702-amino-acid polypeptide reads, in one-letter code: Capsid vertex component 1 (702 aa).

The tract at residues 200-244 is disordered; the sequence is MGESGTPTPQASSVSGGAGPAVVGTPDPPISPEEQLTAPGGDTAT. Residues 210-224 are compositionally biased toward low complexity; that stretch reads ASSVSGGAGPAVVGT.

The protein belongs to the herpesviridae CVC1 protein family. In terms of assembly, interacts (via C-terminus) with capsid vertex component 2/CVC2.

It localises to the virion. Its subcellular location is the host nucleus. Functionally, capsid vertex-specific component that plays a role during viral DNA encapsidation, assuring correct genome cleavage and presumably stabilizing capsids that contain full-length viral genomes. This chain is Capsid vertex component 1, found in Homo sapiens (Human).